We begin with the raw amino-acid sequence, 241 residues long: Large ribosomal subunit protein uL3 (241 aa).

Disordered regions lie at residues 140–162 (SHRS…NKKM) and 217–241 (PLPG…EETA). An N5-methylglutamine modification is found at Gln151. A compositionally biased stretch (low complexity) spans 229–241 (APATEAPAAEETA).

It belongs to the universal ribosomal protein uL3 family. In terms of assembly, part of the 50S ribosomal subunit. Forms a cluster with proteins L14 and L19. Post-translationally, methylated by PrmB.

Functionally, one of the primary rRNA binding proteins, it binds directly near the 3'-end of the 23S rRNA, where it nucleates assembly of the 50S subunit. The chain is Large ribosomal subunit protein uL3 from Methylobacterium radiotolerans (strain ATCC 27329 / DSM 1819 / JCM 2831 / NBRC 15690 / NCIMB 10815 / 0-1).